Here is a 1307-residue protein sequence, read N- to C-terminus: Cellulose synthase 2 operon protein C (1307 aa).

A signal peptide spans 1–55 (MTRPRGPAPRDGAAWRRDPARRVLLRDAVRGREGGLRLACAVMAGLIVSGGVACA). 9 TPR repeats span residues 97–130 (LELL…EPDN), 270–303 (LDGL…EPIT), 339–372 (AAND…DPHD), 374–406 (DALG…GPDA), 458–491 (LTVL…APRD), 493–525 (GALF…APAM), 528–561 (RLEA…DPDD), 754–787 (IGLA…HPDS), and 788–821 (VEAH…KPAN).

Belongs to the AcsC/BcsC family.

The protein resides in the cell outer membrane. It functions in the pathway glycan metabolism; bacterial cellulose biosynthesis. Required for maximal bacterial cellulose synthesis. This chain is Cellulose synthase 2 operon protein C (bcsCII), found in Komagataeibacter xylinus (Gluconacetobacter xylinus).